We begin with the raw amino-acid sequence, 914 residues long: Protein translocase subunit SecA (914 aa).

ATP-binding positions include Gln87, Gly105–Thr109, and Asp500. Positions 898, 900, 909, and 910 each coordinate Zn(2+).

It belongs to the SecA family. In terms of assembly, monomer and homodimer. Part of the essential Sec protein translocation apparatus which comprises SecA, SecYEG and auxiliary proteins SecDF-YajC and YidC. Zn(2+) serves as cofactor.

It is found in the cell inner membrane. The protein resides in the cytoplasm. It catalyses the reaction ATP + H2O + cellular proteinSide 1 = ADP + phosphate + cellular proteinSide 2.. Its function is as follows. Part of the Sec protein translocase complex. Interacts with the SecYEG preprotein conducting channel. Has a central role in coupling the hydrolysis of ATP to the transfer of proteins into and across the cell membrane, serving as an ATP-driven molecular motor driving the stepwise translocation of polypeptide chains across the membrane. The protein is Protein translocase subunit SecA of Acidithiobacillus ferrooxidans (strain ATCC 23270 / DSM 14882 / CIP 104768 / NCIMB 8455) (Ferrobacillus ferrooxidans (strain ATCC 23270)).